The following is a 342-amino-acid chain: S-adenosylmethionine:tRNA ribosyltransferase-isomerase (342 aa).

It belongs to the QueA family. Monomer.

It is found in the cytoplasm. The catalysed reaction is 7-aminomethyl-7-carbaguanosine(34) in tRNA + S-adenosyl-L-methionine = epoxyqueuosine(34) in tRNA + adenine + L-methionine + 2 H(+). It functions in the pathway tRNA modification; tRNA-queuosine biosynthesis. Its function is as follows. Transfers and isomerizes the ribose moiety from AdoMet to the 7-aminomethyl group of 7-deazaguanine (preQ1-tRNA) to give epoxyqueuosine (oQ-tRNA). This Streptococcus pneumoniae serotype 19F (strain G54) protein is S-adenosylmethionine:tRNA ribosyltransferase-isomerase.